The chain runs to 103 residues: UPF0145 protein Rsph17025_2361 (103 aa).

The protein belongs to the UPF0145 family.

This chain is UPF0145 protein Rsph17025_2361, found in Cereibacter sphaeroides (strain ATCC 17025 / ATH 2.4.3) (Rhodobacter sphaeroides).